A 445-amino-acid chain; its full sequence is C4-dicarboxylate transport protein (445 aa).

Transmembrane regions (helical) follow at residues 24–44 (VLYVQVLFAIVVGVLVGWLSP), 62–82 (LIKMVIAPIIFCTVVSGIAHI), 105–125 (FALVLGLIVGNLFPVGHGLAA), 163–183 (GDILQVLLFAVLFGFALMALG), 201–221 (FGVIAIVMKAAPIGAFGAMAF), 234–254 (LIGLVALFYATSALFVVLVLG), 322–342 (IYMTLATLFIAQALGIELSFG), and 370–390 (AGTLAAVNPALVPGMAIVFSI).

Belongs to the dicarboxylate/amino acid:cation symporter (DAACS) (TC 2.A.23) family.

It is found in the cell inner membrane. Responsible for the transport of dicarboxylates such as succinate, fumarate, and malate from the periplasm across the membrane. The sequence is that of C4-dicarboxylate transport protein from Rhodopseudomonas palustris (strain ATCC BAA-98 / CGA009).